A 120-amino-acid chain; its full sequence is UPF0344 protein LMOf2365_2298 (120 aa).

Helical transmembrane passes span 3 to 23, 33 to 53, 62 to 82, and 92 to 112; these read GYIH…ALLI, MLQM…IMMV, ILAI…EMLL, and GMFL…GFYL.

It belongs to the UPF0344 family.

It is found in the cell membrane. The chain is UPF0344 protein LMOf2365_2298 from Listeria monocytogenes serotype 4b (strain F2365).